Consider the following 473-residue polypeptide: MPQTPPFSAMFDSSGYNRNLYQSAEDSCGGLYYHDNNLLSGSLEALIQHLVPNVDYYPDRTYIFTFLLSSRLFMHPYELMAKVCHLCVEHQRLSEGDGDKNQMRKIAPKILQLLTEWTETFPYDFRDERMMRNLKDLAHRMASGEEQTYRKNVQQMMQCLIRKLAALSQYEEVLAKLSSTATDRLTVLKTKPQSIQRDIMTVCSDPYTLAQQLTHIELERLNYIGPEEFVQAFVQKDPLDNDKSCYSERKKTRNLEAYVEWFNRLSYLVATEICMPVKKKHRARMIEYFIDVARECFNIGNFNSLMAIISGMNMSPVSRLKKTWAKVKTAKFDILEHQMDPSSNFYNYRTALRGAAQRSLTAHSSREKIVIPFFSLLIKDIYFLNEGCVNRLPNGHVNFEKFWELAKQVSEFMTWKQVECPFERDRKVLQYLLSVPVFSEDALYLASYESEGPENNIEKDRWKSLRSSLLGRV.

One can recognise an N-terminal Ras-GEF domain in the interval 34–161 (HDNNLLSGSL…NVQQMMQCLI (128 aa)). Residues 205 to 453 (DPYTLAQQLT…YLASYESEGP (249 aa)) enclose the Ras-GEF domain.

As to quaternary structure, interacts with CCDC124 during cytokinesis. Interacts with Ras family proteins. In terms of tissue distribution, constitutively expressed in brain, intestine and testis. Low constitutive expression, if any, in heart, lung, lymph nodes and thymus. Up-regulated in heart, kidney, liver, lymph nodes, spleen and thymus at day 20 after infection with Trypanosoma cruzi. Not detected in muscle.

It localises to the early endosome. The protein localises to the late endosome. It is found in the midbody. Its function is as follows. Guanine nucleotide exchange factor (GEF) with specificity for RAP2A, it doesn't seems to activate other Ras family proteins (in vitro). This chain is Ras-GEF domain-containing family member 1B (Rasgef1b), found in Mus musculus (Mouse).